A 667-amino-acid polypeptide reads, in one-letter code: E3 ubiquitin-protein ligase Midline-1 (667 aa).

The RING-type zinc finger occupies 10-60 (CPICLELLEDPLLLPCAHSLCFNCAHRILVSHCATNEPVESINAFQCPTCR). A phosphoserine mark is found at Ser-92 and Ser-96. 2 B box-type zinc fingers span residues 116–165 (KVLC…IEPI) and 172–212 (GLMC…VAAL). Residues Cys-119, Cys-122, Cys-134, Cys-137, Cys-142, Cys-145, His-150, His-159, Cys-175, His-178, Cys-198, and His-204 each coordinate Zn(2+). Residues 205-264 (RDHQVAALSERYDKLKQNLESNLTNLIKRNTELETLLAKLIQTCQHVEVNASRQEAKLTE) adopt a coiled-coil conformation. The COS domain occupies 320 to 379 (LKENDHARFLQTAKNITERVSMATASSQVLIPEINLNDTFDTFALDFSREKKLLECLDYL). Positions 381 to 484 (APNPPTIREE…EPGKLKTNSQ (104 aa)) constitute a Fibronectin type-III domain. Residues 471-485 (SRSSEPGKLKTNSQP) show a composition bias toward polar residues. The disordered stretch occupies residues 471-524 (SRSSEPGKLKTNSQPFKLDPKSAHRKLKVSHDNLTVERDESSSKKSHTPERFTS). The B30.2/SPRY domain maps to 482-659 (NSQPFKLDPK…IITGLPIPDH (178 aa)). Positions 499–520 (VSHDNLTVERDESSSKKSHTPE) are enriched in basic and acidic residues. Ser-511 carries the post-translational modification Phosphoserine.

It belongs to the TRIM/RBCC family. As to quaternary structure, homodimer or heterodimer with MID2. Interacts with IGBP1.

Its subcellular location is the cytoplasm. It localises to the cytoskeleton. It catalyses the reaction S-ubiquitinyl-[E2 ubiquitin-conjugating enzyme]-L-cysteine + [acceptor protein]-L-lysine = [E2 ubiquitin-conjugating enzyme]-L-cysteine + N(6)-ubiquitinyl-[acceptor protein]-L-lysine.. Functionally, has E3 ubiquitin ligase activity towards IGBP1, promoting its monoubiquitination, which results in deprotection of the catalytic subunit of protein phosphatase PP2A, and its subsequent degradation by polyubiquitination. In Mus spretus (Western Mediterranean mouse), this protein is E3 ubiquitin-protein ligase Midline-1 (Mid1).